The primary structure comprises 143 residues: Subtelomeric hrmA-associated cluster protein cgnA (143 aa).

29 G-Q-I/R/S repeats span residues 11 to 13 (GQI), 14 to 16 (GPI), 17 to 19 (GQR), 20 to 22 (GQS), 23 to 25 (GQR), 26 to 28 (GQS), 29 to 31 (GQR), 32 to 34 (GQS), 35 to 37 (GQI), 38 to 40 (GQS), 41 to 43 (GQS), 44 to 46 (GQS), 47 to 49 (GQI), 50 to 52 (GQI), 53 to 55 (GQI), 56 to 58 (GQI), 59 to 61 (GQI), 62 to 64 (GQI), 65 to 67 (GQI), 68 to 70 (GQI), 71 to 73 (GQI), 74 to 76 (GQI), 77 to 79 (GQI), 80 to 82 (GQI), 83 to 85 (GQI), 86 to 88 (GQI), 89 to 91 (GQI), 92 to 94 (GQI), and 95 to 97 (GQA). The region spanning 11-68 (GQIGPIGQRGQSGQRGQSGQRGQSGQIGQSGQSGQSGQIGQIGQIGQIGQIGQIGQIG) is the Collagen-like domain. The 29 X 3 AA approximate tandem repeats of G-Q-I/R/S stretch occupies residues 11–97 (GQIGPIGQRG…IGQIGQIGQA (87 aa)). Positions 16–49 (IGQRGQSGQRGQSGQRGQSGQIGQSGQSGQSGQI) are disordered.

It is found in the secreted. In terms of biological role, collagen-like protein; part of the subtelomeric hrmA-associated cluster (HAC) containing genes that alter the hyphal surface (such as reduced total chitin or increased beta-glucan exposure) and perturb inter-hyphal interactions within the developing biofilms, resulting in a loss of vertically aligned polarized growing filaments. Consequently, this hypoxia-typic morphotype (called H-MORPH) with altered biofilm architecture leads to increased hypoxia fitness, increased host inflammation, rapid disease progression, and mortality in a murine model of invasive aspergillosis. CgnA is directly involved in the reduction of total surface chitin and the increase of beta-glucan exposure, and mediates the detachment of the extracellular matrix and especially of its component galactosaminogalactan (GAG). The chain is Subtelomeric hrmA-associated cluster protein cgnA from Aspergillus fumigatus (strain ATCC MYA-4609 / CBS 101355 / FGSC A1100 / Af293) (Neosartorya fumigata).